The following is a 974-amino-acid chain: Apical junction component 1 homolog (974 aa).

3 disordered regions span residues 23–137 (PGLT…PSYP), 201–233 (ARSSRSCAPRETTSWARTAPQFHGLTVPGPRHV), and 306–326 (CSRPYLSEEPPRPSPRRGGSY). S52 carries the phosphoserine modification. The segment covering 69–79 (EPPPPEPAPPR) has biased composition (pro residues). Residues 116–134 (RGREAQRAVRVEGSPRREP) are compositionally biased toward basic and acidic residues. S129 is subject to Phosphoserine. Positions 201-216 (ARSSRSCAPRETTSWA) are enriched in polar residues. Residue R322 is modified to Omega-N-methylarginine. Phosphoserine occurs at positions 468, 509, and 512. The disordered stretch occupies residues 539–576 (DLRSVDRPTAKGWELPGGRPRQPVSTVPEGPASSRQRS). Residue S593 is modified to Phosphoserine. The interval 618–661 (AGPGGATLLAPSRSPPASAGSTEEPTGSGEAADASPEPSADEDD) is disordered. Positions 623-636 (ATLLAPSRSPPASA) are enriched in low complexity. Residue R749 is modified to Asymmetric dimethylarginine; alternate. At R749 the chain carries Omega-N-methylarginine; alternate.

It localises to the apical cell membrane. Its subcellular location is the cell projection. The protein localises to the cilium. It is found in the cell junction. The protein resides in the adherens junction. Its function is as follows. May be involved in the control of adherens junction integrity. This Mus musculus (Mouse) protein is Apical junction component 1 homolog (Ajm1).